Here is a 370-residue protein sequence, read N- to C-terminus: UDP-N-acetylglucosamine--N-acetylmuramyl-(pentapeptide) pyrophosphoryl-undecaprenol N-acetylglucosamine transferase (370 aa).

Residues 20 to 22 (TAG), Asn134, Arg170, Ser204, Ile257, and Gln301 contribute to the UDP-N-acetyl-alpha-D-glucosamine site.

It belongs to the glycosyltransferase 28 family. MurG subfamily.

The protein localises to the cell membrane. The catalysed reaction is di-trans,octa-cis-undecaprenyl diphospho-N-acetyl-alpha-D-muramoyl-L-alanyl-D-glutamyl-meso-2,6-diaminopimeloyl-D-alanyl-D-alanine + UDP-N-acetyl-alpha-D-glucosamine = di-trans,octa-cis-undecaprenyl diphospho-[N-acetyl-alpha-D-glucosaminyl-(1-&gt;4)]-N-acetyl-alpha-D-muramoyl-L-alanyl-D-glutamyl-meso-2,6-diaminopimeloyl-D-alanyl-D-alanine + UDP + H(+). It functions in the pathway cell wall biogenesis; peptidoglycan biosynthesis. In terms of biological role, cell wall formation. Catalyzes the transfer of a GlcNAc subunit on undecaprenyl-pyrophosphoryl-MurNAc-pentapeptide (lipid intermediate I) to form undecaprenyl-pyrophosphoryl-MurNAc-(pentapeptide)GlcNAc (lipid intermediate II). The protein is UDP-N-acetylglucosamine--N-acetylmuramyl-(pentapeptide) pyrophosphoryl-undecaprenol N-acetylglucosamine transferase of Corynebacterium jeikeium (strain K411).